Here is a 366-residue protein sequence, read N- to C-terminus: DNA double-strand break repair protein Mre11 (366 aa).

Mn(2+) contacts are provided by D8, H10, D49, and N84. H85 functions as the Proton donor in the catalytic mechanism. Residues H158, H186, and H188 each coordinate Mn(2+).

Belongs to the MRE11/RAD32 family. Homodimer. Forms a heterotetramer composed of two Mre11 subunits and two Rad50 subunits. Mn(2+) is required as a cofactor.

Nuclease activity is regulated by Rad50. Its function is as follows. Part of the Rad50/Mre11 complex, which is involved in the early steps of DNA double-strand break (DSB) repair. The complex may facilitate opening of the processed DNA ends to aid in the recruitment of HerA and NurA. Mre11 binds to DSB ends and has both double-stranded 3'-5' exonuclease activity and single-stranded endonuclease activity. The sequence is that of DNA double-strand break repair protein Mre11 from Methanocaldococcus jannaschii (strain ATCC 43067 / DSM 2661 / JAL-1 / JCM 10045 / NBRC 100440) (Methanococcus jannaschii).